The following is a 265-amino-acid chain: Neutrophil elastase (265 aa).

The signal sequence occupies residues 1-26; that stretch reads MALGRLSSRTLAAMLLALFLGGPALA. One can recognise a Peptidase S1 domain in the interval 29-247; it reads IVGGRPARPH…FADWINSIIR (219 aa). A disulfide bridge links Cys-54 with Cys-70. Active-site charge relay system residues include His-69 and Asp-116. N-linked (GlcNAc...) asparagine glycosylation is found at Asn-123 and Asn-172. 3 disulfides stabilise this stretch: Cys-150–Cys-208, Cys-180–Cys-187, and Cys-198–Cys-223. Residue Ser-202 is the Charge relay system of the active site.

It belongs to the peptidase S1 family. Elastase subfamily. Interacts with NOTCH2NL.

The enzyme catalyses Hydrolysis of proteins, including elastin. Preferential cleavage: Val-|-Xaa &gt; Ala-|-Xaa.. Its function is as follows. Serine protease that modifies the functions of natural killer cells, monocytes and granulocytes. Inhibits C5a-dependent neutrophil enzyme release and chemotaxis. Promotes blood coagulation. Through the activation of the platelet fibrinogen receptor integrin alpha-IIb/beta-3, potentiates platelet aggregation induced by a threshold concentration of cathepsin G (CTSG). Cleaves and thus inactivates tissue factor pathway inhibitor (TFPI). Capable of killing E.coli; probably digests outer membrane protein A (ompA) in E.coli. This is Neutrophil elastase (Elane) from Mus musculus (Mouse).